Here is a 153-residue protein sequence, read N- to C-terminus: IAA acetyltransferase (153 aa).

In terms of domain architecture, N-acetyltransferase spans V4–L153.

Functionally, participates in the tryptophan-dependent indole-3-acetic acid production, which is a phytohormone released by A.brasilense. The polypeptide is IAA acetyltransferase (Azospirillum brasilense).